The following is a 178-amino-acid chain: Interleukin-1 receptor antagonist protein (178 aa).

The N-terminal stretch at 1-26 (MEICRGPYSHLISLLLILLFRSESAG) is a signal peptide. Cys-92 and Cys-142 are oxidised to a cystine. An N-linked (GlcNAc...) asparagine glycan is attached at Asn-110.

Belongs to the IL-1 family.

The protein resides in the secreted. Functionally, anti-inflammatory antagonist of interleukin-1 family of proinflammatory cytokines such as interleukin-1beta/IL1B and interleukin-1alpha/IL1A. Protects from immune dysregulation and uncontrolled systemic inflammation triggered by IL1 for a range of innate stimulatory agents such as pathogens. The protein is Interleukin-1 receptor antagonist protein (Il1rn) of Rattus norvegicus (Rat).